Here is a 221-residue protein sequence, read N- to C-terminus: Sugar transporter SWEET1 (221 aa).

7 helical membrane-spanning segments follow: residues 3–23 (AGGF…LGMF), 42–62 (VQFL…SYGA), 68–88 (ILIV…LAYL), 96–116 (VVLL…GYFW), 129–149 (LGLF…ADLA), 160–180 (LSYP…LYGF), and 186–206 (YIMV…WLFW). Residues 10 to 94 (LIYGACVVFT…LAYLHYCPRK (85 aa)) enclose the MtN3/slv 1 domain. The region spanning 127–212 (QQLGLFCSVF…WLFWKYPQEQ (86 aa)) is the MtN3/slv 2 domain. The mediates interaction with TRPV2 stretch occupies residues 149 to 221 (AKVIQTKSTQ…QDRNYWLLQT (73 aa)).

It belongs to the SWEET sugar transporter family. As to quaternary structure, interacts with TRPV2; the interaction probably occurs intracellularly and depends on TRPV2 N-glycosylation. In terms of tissue distribution, ubiquitously expressed with highest expression in oviduct, epididymis and intestine.

The protein localises to the golgi apparatus membrane. It localises to the cell membrane. Mediates sugar transport across membranes. May stimulate V(D)J recombination by the activation of RAG1. This is Sugar transporter SWEET1 (SLC50A1) from Homo sapiens (Human).